A 689-amino-acid polypeptide reads, in one-letter code: Glycine--tRNA ligase beta subunit (689 aa).

Belongs to the class-II aminoacyl-tRNA synthetase family. In terms of assembly, tetramer of two alpha and two beta subunits.

The protein resides in the cytoplasm. It catalyses the reaction tRNA(Gly) + glycine + ATP = glycyl-tRNA(Gly) + AMP + diphosphate. The protein is Glycine--tRNA ligase beta subunit of Klebsiella pneumoniae subsp. pneumoniae (strain ATCC 700721 / MGH 78578).